A 496-amino-acid chain; its full sequence is Gamma-aminobutyric acid receptor subunit beta-like (496 aa).

The or 27 signal peptide spans 1-20 (MTCFTRVGVSCGLFFFLLGA). Topologically, residues 21 to 258 (QLQLIRCIRK…SFKLQRNIGY (238 aa)) are extracellular. N-linked (GlcNAc...) asparagine glycans are attached at residues Asn-39 and Asn-189. A disulfide bridge connects residues Cys-176 and Cys-190. Transmembrane regions (helical) follow at residues 259-280 (FVFQ…SFWI), 285-306 (TSAR…STGV), and 318-342 (AIDI…AVNY). Residues 343–472 (TYWGKRAKKK…KIKDVNIIDK (130 aa)) lie on the Cytoplasmic side of the membrane. A helical transmembrane segment spans residues 473 to 494 (YSRMIFPISFLAFNLGYWLFYI).

Belongs to the ligand-gated ion channel (TC 1.A.9) family. Gamma-aminobutyric acid receptor (TC 1.A.9.5) subfamily. Generally pentameric. There are five types of GABA(A) receptor chains: alpha, beta, gamma, delta, and rho. Interacts with Grd (alpha chain).

It localises to the postsynaptic cell membrane. Its subcellular location is the cell membrane. GABA, an inhibitory neurotransmitter, mediates neuronal inhibition by binding to the GABA receptor and opening an integral chloride channel. Combines with the ligand-gated ion channel subunit GRD to form cation-selective GABA-gated ion channels when coexpressed in Xenopus laevis oocytes. This is Gamma-aminobutyric acid receptor subunit beta-like (Lcch3) from Drosophila melanogaster (Fruit fly).